Consider the following 509-residue polypeptide: Midnolin (509 aa).

A compositionally biased stretch (polar residues) spans 1 to 12 (MDQHPSARSCSS). Residues 1-27 (MDQHPSARSCSSRGAAPSCESVSGEPP) form a disordered region. A Ubiquitin-like domain is found at 28-102 (MNLYIHSTTG…LTLVPTVEAG (75 aa)). 3 disordered regions span residues 172–295 (GSSE…NTPL), 370–404 (QCTS…ETQP), and 448–485 (KRLR…EGSL). Residues 176–190 (GTTGLSHGASGSASG) show a composition bias toward low complexity. The segment covering 196 to 209 (HNPHPHHPHQHPHH) has biased composition (basic residues). The span at 220 to 231 (AFPPSPSIPSIP) shows a compositional bias: pro residues. Positions 261–285 (PSSACAPSPSSPSPAASCPEASCSA) are enriched in low complexity. The span at 286–295 (KTSGNCNTPL) shows a compositional bias: polar residues. Positions 376–386 (SPAPSPPPSPP) are enriched in pro residues. Residues 387–400 (HTTGLTGLPTTVPS) are compositionally biased toward low complexity.

It is found in the nucleus. Its subcellular location is the cytoplasm. The protein resides in the cytosol. The protein localises to the nucleolus. Its function is as follows. Facilitates ubiquitin-independent proteasomal degradation of polycomb protein CBX4. Plays a role in inhibiting the activity of glucokinase GCK and both glucose-induced and basal insulin secretion. This is Midnolin (midn) from Danio rerio (Zebrafish).